The chain runs to 147 residues: Lysozyme C (147 aa).

The signal sequence occupies residues 1 to 18 (MKFFLILGFCLLPLIAQG). The C-type lysozyme domain maps to 19-147 (KVFQRCELAA…VSQWIRGCRV (129 aa)). 4 cysteine pairs are disulfide-bonded: Cys-24/Cys-145, Cys-48/Cys-133, Cys-82/Cys-98, and Cys-94/Cys-112. Active-site residues include Glu-53 and Asp-70. A substrate-binding site is contributed by Asp-119.

Belongs to the glycosyl hydrolase 22 family. As to quaternary structure, monomer. As to expression, expressed in liver and ovary. Not expressed in bone marrow, lung, spleen, intestine or oviduct.

Its subcellular location is the secreted. It catalyses the reaction Hydrolysis of (1-&gt;4)-beta-linkages between N-acetylmuramic acid and N-acetyl-D-glucosamine residues in a peptidoglycan and between N-acetyl-D-glucosamine residues in chitodextrins.. Its function is as follows. Lysozymes have primarily a bacteriolytic function; those in tissues and body fluids are associated with the monocyte-macrophage system and enhance the activity of immunoagents. Has bacteriolytic activity against M.luteus. The protein is Lysozyme C of Dromaius novaehollandiae (Emu).